The following is a 523-amino-acid chain: MAYRNTVCTPQVIDLETEQGHSHIHSESFNRTGNDSSDQGAQHAVRGVGNATNIGLSDMRSYYDAGMNHPHQPVHNLPPNLGVDSGFVFPSSMYNPCMSTTSMNQYVSHTQSFGLPSNQVVLGSMDEGSRNENAGESARGFIKRKNAAVAGSYHCANGFASSSSSHASLNPTHRPWDPSFESNVLPNTASYNPSEYHSQTSWPSMEGSSIPSNGFNLMGAHPESAQHGNYAFPTSHISQCFQPTSNTWISQSANGIADGIPQWEYVNGMNNAPGRFSRSGMTETVNGSFREYQNGPSTLCRGPLPYFHQHAGMHAHNLLDHTQVQAPYQQCHNNPVLHGVNHSGNRFHLGPRIPVLFSNSERTFGPPHHPLLANPVNHRNIRILPPEHATIMDFSRLYEVSNVVDEHRDMRLDIDSMTYEELLALEEQIGDVNTGLAKSYIVEKLKTSLFVPGSSCMSNKSSESSMENDACIICQEEYQVKECIGTLDCGHRYHEDCIKQWLMVKNLCPICKTTALSTGRRSG.

The segment covering 18–28 (EQGHSHIHSES) has biased composition (basic and acidic residues). The segment at 18–43 (EQGHSHIHSESFNRTGNDSSDQGAQH) is disordered. Positions 29-40 (FNRTGNDSSDQG) are enriched in polar residues. The RING-type; atypical zinc finger occupies 471–512 (CIICQEEYQVKECIGTLDCGHRYHEDCIKQWLMVKNLCPICK).

The protein belongs to the RING-type zinc finger family. Interacts with DJA6.

The enzyme catalyses S-ubiquitinyl-[E2 ubiquitin-conjugating enzyme]-L-cysteine + [acceptor protein]-L-lysine = [E2 ubiquitin-conjugating enzyme]-L-cysteine + N(6)-ubiquitinyl-[acceptor protein]-L-lysine.. It functions in the pathway protein modification; protein ubiquitination. Its function is as follows. Probable E3 ubiquitin-protein ligase. This Oryza sativa subsp. japonica (Rice) protein is Probable E3 ubiquitin-protein ligase ZFP1.